The sequence spans 1052 residues: Fibroblast growth factor receptor homolog 2 (1052 aa).

The N-terminal stretch at 1 to 19 (MAKVPITLVMIIAIVSAAA) is a signal peptide. At 20–600 (DLGCDYGHHR…EIYALLHAHP (581 aa)) the chain is on the extracellular side. 3 Ig-like C2-type domains span residues 23 to 117 (CDYG…IASF), 124 to 230 (PALP…PTQL), and 240 to 340 (PMLK…RTVA). A disulfide bridge links C30 with C90. Residues N99, N137, N175, N181, N249, and N257 are each glycosylated (N-linked (GlcNAc...) asparagine). A disulfide bridge connects residues C164 and C217. A disulfide bridge links C262 with C329. The span at 358 to 372 (TTTTTVASPIPTAST) shows a compositional bias: low complexity. The interval 358-393 (TTTTTVASPIPTASTGEDNDDDVENPAAEASGGVGP) is disordered. Ig-like C2-type domains lie at 393 to 478 (PPVF…FSVQ) and 487 to 585 (PIIV…RVVS). A disulfide bond links C416 and C462. Residues N423, N444, N494, N500, N526, N541, N546, N555, and N576 are each glycosylated (N-linked (GlcNAc...) asparagine). C507 and C566 are disulfide-bonded. A helical transmembrane segment spans residues 601 to 626 (LGFTLAAITIVALFLLGSAFITFMLR). Residues 627–1052 (RLRREKLLKL…LRYQYTYKFN (426 aa)) lie on the Cytoplasmic side of the membrane. A Protein kinase domain is found at 712–1000 (LSLGSILGEG…ELVESFDGIL (289 aa)). Residues 718-726 (LGEGAFGRV) and K748 contribute to the ATP site. The active-site Proton acceptor is D864. Y895 is subject to Phosphotyrosine; by autocatalysis. Residues 1017–1038 (PMLETPPSSGDEDDGSDTETFR) form a disordered region.

This sequence belongs to the protein kinase superfamily. Tyr protein kinase family. Fibroblast growth factor receptor subfamily. As to expression, during embryogenesis, expression is seen in mesoderm, endodermal precursor cells, CNS midline cells and trachea and salivary duct ectodermal cells.

Its subcellular location is the membrane. It catalyses the reaction L-tyrosyl-[protein] + ATP = O-phospho-L-tyrosyl-[protein] + ADP + H(+). May be required for patterning of muscle precursor cells: generation of mesodermal and endodermal layers, invaginations of various types of cells, and CNS formation. Essential for the ability of the migrating tracheal and midline cells to recognize external guiding cues. The sequence is that of Fibroblast growth factor receptor homolog 2 (btl) from Drosophila melanogaster (Fruit fly).